The following is an 802-amino-acid chain: Leucine--tRNA ligase (802 aa).

The 'HIGH' region motif lies at 40 to 51 (PYPSGAGLHVGH). Residues 576-580 (KMSKS) carry the 'KMSKS' region motif. Lys579 provides a ligand contact to ATP.

The protein belongs to the class-I aminoacyl-tRNA synthetase family.

The protein localises to the cytoplasm. It carries out the reaction tRNA(Leu) + L-leucine + ATP = L-leucyl-tRNA(Leu) + AMP + diphosphate. The protein is Leucine--tRNA ligase of Bacillus cereus (strain ATCC 10987 / NRS 248).